Reading from the N-terminus, the 236-residue chain is Ribose-5-phosphate isomerase A 2 (236 aa).

Substrate-binding positions include 31–34, 86–89, and 99–102; these read SGTT, DGPD, and KGGG. E108 acts as the Proton acceptor in catalysis. Residue K126 participates in substrate binding.

This sequence belongs to the ribose 5-phosphate isomerase family. In terms of assembly, homodimer.

The catalysed reaction is aldehydo-D-ribose 5-phosphate = D-ribulose 5-phosphate. Its pathway is carbohydrate degradation; pentose phosphate pathway; D-ribose 5-phosphate from D-ribulose 5-phosphate (non-oxidative stage): step 1/1. In terms of biological role, catalyzes the reversible conversion of ribose-5-phosphate to ribulose 5-phosphate. The protein is Ribose-5-phosphate isomerase A 2 of Yersinia pestis.